The chain runs to 154 residues: Deoxyuridine 5'-triphosphate nucleotidohydrolase (154 aa).

Residues 74 to 76, N87, 91 to 93, and K101 each bind substrate; these read RSG and TID.

The protein belongs to the dUTPase family. The cofactor is Mg(2+).

The catalysed reaction is dUTP + H2O = dUMP + diphosphate + H(+). Its pathway is pyrimidine metabolism; dUMP biosynthesis; dUMP from dCTP (dUTP route): step 2/2. Its function is as follows. This enzyme is involved in nucleotide metabolism: it produces dUMP, the immediate precursor of thymidine nucleotides and it decreases the intracellular concentration of dUTP so that uracil cannot be incorporated into DNA. The protein is Deoxyuridine 5'-triphosphate nucleotidohydrolase of Cytophaga hutchinsonii (strain ATCC 33406 / DSM 1761 / CIP 103989 / NBRC 15051 / NCIMB 9469 / D465).